We begin with the raw amino-acid sequence, 961 residues long: Mitogen-activated protein kinase kinase kinase 13-B (961 aa).

Residues 89 to 115 are disordered; it reads RDQDEPENTAPQGSSHSGDGGNNSANE. Residues 101-114 are compositionally biased toward low complexity; that stretch reads GSSHSGDGGNNSAN. The Protein kinase domain maps to 171–412; it reads ISELQWLGSG…FRQILMHLDI (242 aa). Residues 177 to 185 and Lys198 contribute to the ATP site; that span reads LGSGAQGAV. Asp282 acts as the Proton acceptor in catalysis. Leucine-zipper stretches follow at residues 436-457 and 489-510; these read VKKHFEKIKSEGTCIHRLDEEL and LSSIMLQLEVREKELTRREQTV. Residues 460-497 adopt a coiled-coil conformation; that stretch reads RRREELRHALDIREHYERKLERANNLYMELSSIMLQLE. Disordered regions lie at residues 507–644, 796–874, and 933–961; these read EQTV…ETSQ, TPPA…DVAC, and NAESDCDSSEGECSDATVRTNNPVNSSTW. Low complexity predominate over residues 563-580; the sequence is AEGSAASASPISGSPKTS. Basic residues predominate over residues 586 to 598; the sequence is GRYRSKPRHRRGN. Low complexity predominate over residues 613 to 628; sequence QESPAPSQQSSQHQTP. A compositionally biased stretch (acidic residues) spans 813–826; that stretch reads DSSEGEEGEVDSEV. The acidic stretch occupies residues 814-827; sequence SSEGEEGEVDSEVE. The span at 839-854 shows a compositional bias: polar residues; sequence STCQSYSTFSSENFSV. Over residues 934–945 the composition is skewed to acidic residues; it reads AESDCDSSEGEC. Over residues 949–961 the composition is skewed to polar residues; that stretch reads TVRTNNPVNSSTW.

The protein belongs to the protein kinase superfamily. Ser/Thr protein kinase family.

Its subcellular location is the cytoplasm. It localises to the membrane. It catalyses the reaction L-seryl-[protein] + ATP = O-phospho-L-seryl-[protein] + ADP + H(+). The catalysed reaction is L-threonyl-[protein] + ATP = O-phospho-L-threonyl-[protein] + ADP + H(+). Functionally, may have a role in the JNK signaling pathway. The sequence is that of Mitogen-activated protein kinase kinase kinase 13-B (map3k13-b) from Xenopus laevis (African clawed frog).